A 134-amino-acid polypeptide reads, in one-letter code: Probable glycine cleavage system H protein (134 aa).

The Lipoyl-binding domain maps to 29 to 110 (TVLVGITDYA…PYENWIAKLK (82 aa)). An N6-lipoyllysine modification is found at Lys-70.

Belongs to the GcvH family. As to quaternary structure, the glycine cleavage system is composed of four proteins: P, T, L and H. (R)-lipoate serves as cofactor.

The glycine cleavage system catalyzes the degradation of glycine. The H protein shuttles the methylamine group of glycine from the P protein to the T protein. The protein is Probable glycine cleavage system H protein of Thermococcus gammatolerans (strain DSM 15229 / JCM 11827 / EJ3).